Here is a 182-residue protein sequence, read N- to C-terminus: UPF0316 protein BCAH820_3389 (182 aa).

The next 3 helical transmembrane spans lie at 6–26 (LIFV…ILLV), 32–52 (SAAA…GIVF), and 58–78 (WMNI…GGYI).

This sequence belongs to the UPF0316 family.

Its subcellular location is the cell membrane. This is UPF0316 protein BCAH820_3389 from Bacillus cereus (strain AH820).